The sequence spans 137 residues: Altered inheritance of mitochondria protein 11 (137 aa).

2 helical membrane-spanning segments follow: residues 20-37 (YGAA…SRAI) and 66-88 (LTYA…CWAL).

The protein belongs to the AIM11 family.

The protein localises to the membrane. The sequence is that of Altered inheritance of mitochondria protein 11 (AIM11) from Saccharomyces cerevisiae (strain RM11-1a) (Baker's yeast).